The following is a 270-amino-acid chain: ATP synthase subunit b 1 (270 aa).

The chain crosses the membrane as a helical span at residues 2-22; sequence LIDWFTVIAQLINFLVLVWLL.

Belongs to the ATPase B chain family. F-type ATPases have 2 components, F(1) - the catalytic core - and F(0) - the membrane proton channel. F(1) has five subunits: alpha(3), beta(3), gamma(1), delta(1), epsilon(1). F(0) has three main subunits: a(1), b(2) and c(10-14). The alpha and beta chains form an alternating ring which encloses part of the gamma chain. F(1) is attached to F(0) by a central stalk formed by the gamma and epsilon chains, while a peripheral stalk is formed by the delta and b chains.

The protein localises to the cell inner membrane. In terms of biological role, f(1)F(0) ATP synthase produces ATP from ADP in the presence of a proton or sodium gradient. F-type ATPases consist of two structural domains, F(1) containing the extramembraneous catalytic core and F(0) containing the membrane proton channel, linked together by a central stalk and a peripheral stalk. During catalysis, ATP synthesis in the catalytic domain of F(1) is coupled via a rotary mechanism of the central stalk subunits to proton translocation. Its function is as follows. Component of the F(0) channel, it forms part of the peripheral stalk, linking F(1) to F(0). The polypeptide is ATP synthase subunit b 1 (Marinomonas sp. (strain MWYL1)).